Reading from the N-terminus, the 558-residue chain is AP2-like ethylene-responsive transcription factor AIL5 (558 aa).

Low complexity predominate over residues 1 to 54 (MKNNNNKSSSSSSYDSSLSPSSSSSSHQNWLSFSLSNNNNNFNSSSNPNLTSST). Disordered stretches follow at residues 1–65 (MKNN…PSHL), 74–93 (SPVE…ATAV), and 166–195 (HSSE…KNVE). 2 consecutive DNA-binding regions (AP2/ERF) follow at residues 203-269 (IYRG…TNFP) and 305-363 (MYRG…TNFD). The segment at 387–406 (SPATAAADKTVDLSPSDSPS) is disordered.

This sequence belongs to the AP2/ERF transcription factor family. AP2 subfamily. In terms of tissue distribution, expressed in roots, seedlings, inflorescence, and siliques. Also detected at low levels in leaves.

It localises to the nucleus. Probably acts as a transcriptional activator. Binds to the GCC-box pathogenesis-related promoter element. May be involved in the regulation of gene expression by stress factors and by components of stress signal transduction pathways. Involved in the regulation of floral organs size. This is AP2-like ethylene-responsive transcription factor AIL5 from Arabidopsis thaliana (Mouse-ear cress).